The sequence spans 119 residues: MKALSPVRGCYEAVCCLSERSLAIARGRGKSPSTEEPLSLLDDMNHCYSRLRELVPGVPRGTQLSQVEILQRVIDYILDLQVVLAEPAPGPPDGPHLPIQTAELTPELVISKDKRSFCH.

One can recognise a bHLH domain in the interval 28-80; sequence RGKSPSTEEPLSLLDDMNHCYSRLRELVPGVPRGTQLSQVEILQRVIDYILDL. The interval 35-87 is interaction with IFI204; that stretch reads EEPLSLLDDMNHCYSRLRELVPGVPRGTQLSQVEILQRVIDYILDLQVVLAEP.

In terms of assembly, homodimer, and heterodimer with other HLH proteins. Interacts with CLOCK and BMAL1. Interacts with COPS5 and COPS7A. Interacts with IFI204. Interacts with GATA4 and NKX2-5. Interacts with ANKRD2; both proteins cooperate in myoblast differentiation. Post-translationally, polyubiquitinated; which is favored by Ifi204 and leads to proteasomal degradation. Expressed by myoblasts (at protein level).

The protein localises to the nucleus. It localises to the cytoplasm. Functionally, transcriptional regulator (lacking a basic DNA binding domain) which negatively regulates the basic helix-loop-helix (bHLH) transcription factors by forming heterodimers and inhibiting their DNA binding and transcriptional activity. Implicated in regulating a variety of cellular processes, including cellular growth, senescence, differentiation, apoptosis, angiogenesis, and neoplastic transformation. Involved in myogenesis by inhibiting skeletal muscle and cardiac myocyte differentiation and promoting muscle precursor cells proliferation. Inhibits the binding of E2A-containing protein complexes to muscle creatine kinase E-box enhancer. Regulates the circadian clock by repressing the transcriptional activator activity of the CLOCK-BMAL1 heterodimer. The protein is DNA-binding protein inhibitor ID-3 (Id3) of Mus musculus (Mouse).